Here is a 323-residue protein sequence, read N- to C-terminus: ATP synthase gamma chain (323 aa).

It belongs to the ATPase gamma chain family. In terms of assembly, F-type ATPases have 2 components, CF(1) - the catalytic core - and CF(0) - the membrane proton channel. CF(1) has five subunits: alpha(3), beta(3), gamma(1), delta(1), epsilon(1). CF(0) has three main subunits: a, b and c.

The protein localises to the cell inner membrane. In terms of biological role, produces ATP from ADP in the presence of a proton gradient across the membrane. The gamma chain is believed to be important in regulating ATPase activity and the flow of protons through the CF(0) complex. The chain is ATP synthase gamma chain from Rickettsia peacockii (strain Rustic).